Here is a 360-residue protein sequence, read N- to C-terminus: Glutamine synthetase (360 aa).

Residues I26 to G105 form the GS beta-grasp domain. A GS catalytic domain is found at Y112–N360.

This sequence belongs to the glutamine synthetase family. In terms of assembly, homooctamer.

The protein resides in the cytoplasm. The enzyme catalyses L-glutamate + NH4(+) + ATP = L-glutamine + ADP + phosphate + H(+). The protein is Glutamine synthetase (GLN1) of Colletotrichum gloeosporioides (Anthracnose fungus).